We begin with the raw amino-acid sequence, 334 residues long: DNA-directed RNA polymerase subunit alpha (334 aa).

Residues Met1–Leu231 form an alpha N-terminal domain (alpha-NTD) region. An alpha C-terminal domain (alpha-CTD) region spans residues Glu247–Asn334.

Belongs to the RNA polymerase alpha chain family. In terms of assembly, homodimer. The RNAP catalytic core consists of 2 alpha, 1 beta/beta' and 1 omega subunit. When a sigma factor is associated with the core the holoenzyme is formed, which can initiate transcription.

The catalysed reaction is RNA(n) + a ribonucleoside 5'-triphosphate = RNA(n+1) + diphosphate. DNA-dependent RNA polymerase catalyzes the transcription of DNA into RNA using the four ribonucleoside triphosphates as substrates. The sequence is that of DNA-directed RNA polymerase subunit alpha from Helicobacter hepaticus (strain ATCC 51449 / 3B1).